We begin with the raw amino-acid sequence, 156 residues long: ATP synthase subunit b', chloroplastic (156 aa).

A helical membrane pass occupies residues 24-44 (ATLPLVAIQFILLMVLLNILL).

The protein belongs to the ATPase B chain family. F-type ATPases have 2 components, F(1) - the catalytic core - and F(0) - the membrane proton channel. F(1) has five subunits: alpha(3), beta(3), gamma(1), delta(1), epsilon(1). F(0) has four main subunits: a(1), b(1), b'(1) and c(10-14). The alpha and beta chains form an alternating ring which encloses part of the gamma chain. F(1) is attached to F(0) by a central stalk formed by the gamma and epsilon chains, while a peripheral stalk is formed by the delta, b and b' chains.

The protein resides in the plastid. The protein localises to the chloroplast thylakoid membrane. F(1)F(0) ATP synthase produces ATP from ADP in the presence of a proton or sodium gradient. F-type ATPases consist of two structural domains, F(1) containing the extramembraneous catalytic core and F(0) containing the membrane proton channel, linked together by a central stalk and a peripheral stalk. During catalysis, ATP synthesis in the catalytic domain of F(1) is coupled via a rotary mechanism of the central stalk subunits to proton translocation. Functionally, component of the F(0) channel, it forms part of the peripheral stalk, linking F(1) to F(0). The b'-subunit is a diverged and duplicated form of b found in plants and photosynthetic bacteria. This Phaeodactylum tricornutum (strain CCAP 1055/1) protein is ATP synthase subunit b', chloroplastic.